The sequence spans 109 residues: Large ribosomal subunit protein uL22 (109 aa).

Belongs to the universal ribosomal protein uL22 family. In terms of assembly, part of the 50S ribosomal subunit.

Functionally, this protein binds specifically to 23S rRNA; its binding is stimulated by other ribosomal proteins, e.g. L4, L17, and L20. It is important during the early stages of 50S assembly. It makes multiple contacts with different domains of the 23S rRNA in the assembled 50S subunit and ribosome. The globular domain of the protein is located near the polypeptide exit tunnel on the outside of the subunit, while an extended beta-hairpin is found that lines the wall of the exit tunnel in the center of the 70S ribosome. This is Large ribosomal subunit protein uL22 from Blochmanniella pennsylvanica (strain BPEN).